The primary structure comprises 132 residues: Small ribosomal subunit protein uS8 (132 aa).

It belongs to the universal ribosomal protein uS8 family. In terms of assembly, part of the 30S ribosomal subunit. Contacts proteins S5 and S12.

One of the primary rRNA binding proteins, it binds directly to 16S rRNA central domain where it helps coordinate assembly of the platform of the 30S subunit. The chain is Small ribosomal subunit protein uS8 from Desulforamulus reducens (strain ATCC BAA-1160 / DSM 100696 / MI-1) (Desulfotomaculum reducens).